Consider the following 435-residue polypeptide: Apparent malate synthase (435 aa).

Mg(2+) is bound by residues E159 and N180. E159 lines the substrate pocket.

This sequence belongs to the HpcH/HpaI aldolase family. Mg(2+) is required as a cofactor. Mn(2+) serves as cofactor. It depends on Co(2+) as a cofactor. Requires Ca(2+) as cofactor.

The enzyme catalyses (S)-malyl-CoA = glyoxylate + acetyl-CoA. It carries out the reaction (S)-malyl-CoA + H2O = (S)-malate + CoA + H(+). Involved in the methylaspartate cycle. Catalyzes the biosynthesis of malate in two steps. In the first reaction acetyl-CoA is condensed reversibly with glyoxylate to form (S)-malyl-CoA. In the second reaction (S)-malyl-CoA is hydrolyzed to malate and CoA. It can also catalyze the condensation of propionyl-CoA with glyoxylate and of acetyl-CoA with pyruvate, however the CoA-ester hydrolysis reaction is highly specific for (S)-malyl-CoA. The sequence is that of Apparent malate synthase (aceB) from Haloarcula marismortui (strain ATCC 43049 / DSM 3752 / JCM 8966 / VKM B-1809) (Halobacterium marismortui).